The sequence spans 485 residues: Efflux pump bik6 (485 aa).

A run of 6 helical transmembrane segments spans residues 42–62 (VYTT…SAIY), 86–106 (LLIF…EVYG), 108–128 (KWPA…TATA), 139–159 (FFAG…IVDI), 172–192 (YGIT…AFIA), and 199–219 (WTEY…ALWL). Asparagine 241 carries N-linked (GlcNAc...) asparagine glycosylation. 6 helical membrane-spanning segments follow: residues 269 to 289 (MLLD…YAIL), 306 to 326 (WGPV…LFAA), 353 to 373 (LPPM…FGWT), 379 to 399 (SSPW…TTIF), 417 to 437 (AIAA…LFVW), and 447 to 467 (WGST…FLFF).

Belongs to the major facilitator superfamily.

The protein resides in the membrane. Efflux pump; part of the gene cluster that mediates the biosynthesis of bikaverin, a red pigment also considered as a mycotoxin. This Gibberella fujikuroi (strain CBS 195.34 / IMI 58289 / NRRL A-6831) (Bakanae and foot rot disease fungus) protein is Efflux pump bik6.